Reading from the N-terminus, the 855-residue chain is Cell surface glycoprotein (855 aa).

Residues 1–22 (MTANKQVRAVLLAALMVFSVFA) form the signal peptide. Asn78, Asn83, Asn108, Asn167, Asn174, Asn187, Asn203, Asn227, Asn230, Asn313, Asn363, Asn441, Asn548, Asn588, Asn608, Asn620, Asn642, Asn656, and Asn754 each carry an N-linked (GlcNAc...) asparagine glycan. Low complexity predominate over residues 782–802 (ETTTAAETTTTEESTETTTTE). Residues 782 to 831 (ETTTAAETTTTEESTETTTTEESTEEPTETATATEEPTEEATEETTESST) are disordered. A compositionally biased stretch (acidic residues) spans 817–827 (EPTEEATEETT). The chain crosses the membrane as a helical span at residues 831-851 (TPGFGVVVALVALVAAALLAV). Residues 832–834 (PGF) carry the PGF sorting signal motif.

This sequence belongs to the halobacterial S-layer protein family. Glycosylated. In terms of processing, cleaved by the archaeosortase ArtA at the C-terminus, with removal of a short hydrophobic segment. Post-translationally, lipidation.

It is found in the secreted. The protein localises to the cell wall. It localises to the S-layer. Its subcellular location is the cell membrane. S-layer protein. The S-layer is a paracrystalline mono-layered assembly of proteins which coats the surface of the cell. This chain is Cell surface glycoprotein, found in Haloferax gibbonsii.